A 311-amino-acid chain; its full sequence is MEKINNVTEFIFWGLSQSPEIEKVCFVVFSFFYIIILLGNLLIMLTVCLSNLFKSPMYFFLSFLSFVDICYSSVTAPKMIVDLLAKDKTISYVGCMLQLFGVHFFGCTEIFILTVMAYDRYVAICKPLHYMTIMNRETCNKMLLGTWVGGFLHSIIQVALVVQLPFCGPNEIDHYFCDVHPVLKLACTETYIVGVVVTANSGTIALGSFVILLISYSIILVSLRKQSAEGRRKALSTCGSHIAMVVIFFGPCTFMYMRPDTTFSEDKMVAVFYTIITPMLNPLIYTLRNAEVKNAMKKLWGRNVFLEAKGK.

The Extracellular segment spans residues 1 to 23; the sequence is MEKINNVTEFIFWGLSQSPEIEK. The N-linked (GlcNAc...) asparagine glycan is linked to asparagine 6. Residues 24 to 47 form a helical membrane-spanning segment; the sequence is VCFVVFSFFYIIILLGNLLIMLTV. The Cytoplasmic portion of the chain corresponds to 48-55; sequence CLSNLFKS. A helical membrane pass occupies residues 56–77; that stretch reads PMYFFLSFLSFVDICYSSVTAP. The Extracellular segment spans residues 78–98; it reads KMIVDLLAKDKTISYVGCMLQ. Cysteine 95 and cysteine 187 are oxidised to a cystine. The chain crosses the membrane as a helical span at residues 99-118; the sequence is LFGVHFFGCTEIFILTVMAY. Residues 119–137 lie on the Cytoplasmic side of the membrane; the sequence is DRYVAICKPLHYMTIMNRE. A helical transmembrane segment spans residues 138 to 156; it reads TCNKMLLGTWVGGFLHSII. The Extracellular segment spans residues 157–193; it reads QVALVVQLPFCGPNEIDHYFCDVHPVLKLACTETYIV. The helical transmembrane segment at 194–217 threads the bilayer; the sequence is GVVVTANSGTIALGSFVILLISYS. Over 218 to 233 the chain is Cytoplasmic; the sequence is IILVSLRKQSAEGRRK. Residues 234–256 traverse the membrane as a helical segment; the sequence is ALSTCGSHIAMVVIFFGPCTFMY. Over 257–267 the chain is Extracellular; sequence MRPDTTFSEDK. The chain crosses the membrane as a helical span at residues 268-287; the sequence is MVAVFYTIITPMLNPLIYTL. Residues 288-311 lie on the Cytoplasmic side of the membrane; sequence RNAEVKNAMKKLWGRNVFLEAKGK.

The protein belongs to the G-protein coupled receptor 1 family.

It localises to the cell membrane. Its function is as follows. Odorant receptor. The protein is Olfactory receptor 4S2 (OR4S2) of Homo sapiens (Human).